A 1037-amino-acid polypeptide reads, in one-letter code: PH and SEC7 domain-containing protein 3 (1037 aa).

The segment at 37–70 (EEKTPDSSDHGGSTLLPPTVTNEFPEYGTMEEGG) is disordered. Serine 76 bears the Phosphoserine mark. 5 disordered regions span residues 169–189 (TASH…GKSP), 236–255 (RVPE…HNPV), 262–284 (REQR…SMGR), 304–335 (EAES…ACGV), and 353–375 (APSE…ESGE). A compositionally biased stretch (low complexity) spans 237-251 (VPESACPVSSSSAGS). A compositionally biased stretch (basic and acidic residues) spans 262 to 277 (REQRSDLGREHPRGYD). Residues 515–723 (NSVYTRGPQE…KALYNSIKNE (209 aa)) form the SEC7 domain. A compositionally biased stretch (basic and acidic residues) spans 730 to 747 (DDEEKKKSPSEGTDEKAN). Residues 730–762 (DDEEKKKSPSEGTDEKANGTHPKTISRIGSTTN) form a disordered region. Residues 750–762 (HPKTISRIGSTTN) are compositionally biased toward polar residues. Serine 759 is subject to Phosphoserine. A PH domain is found at 774–887 (AVYKSGFLAR…WINKINCVAA (114 aa)). Residues 911 to 941 (ATTTKLSQEEQLKSHESKLKQITTELAEHRS) adopt a coiled-coil conformation. A disordered region spans residues 984–1037 (LLTTDGNEPVGLKKSHSSPSLNPDASPVTAKVKRNVSERKDHRPETPGIKQKVT). 5 positions are modified to phosphoserine: serine 998, serine 1000, serine 1001, serine 1003, and serine 1009. Basic and acidic residues predominate over residues 1018 to 1028 (NVSERKDHRPE).

Ubiquitously expressed, with highest levels in liver. Present in brain, with highest levels in olfactory bulb, cortex, hippocampal pyramidal cell layer and cerebellar granule cell layer (at protein level).

The protein resides in the cell membrane. It is found in the cell projection. It localises to the ruffle membrane. The protein localises to the postsynaptic density. Functionally, guanine nucleotide exchange factor for ARF6. This is PH and SEC7 domain-containing protein 3 (Psd3) from Mus musculus (Mouse).